Here is a 279-residue protein sequence, read N- to C-terminus: Acyl-coenzyme A thioesterase MBLAC2 (279 aa).

Ser-2 bears the N-acetylserine mark. Zn(2+) contacts are provided by His-83, His-85, Asp-87, His-88, His-170, Asp-189, and His-231. Cys-254 carries the S-palmitoyl cysteine lipid modification.

It belongs to the metallo-beta-lactamase superfamily. Glyoxalase II family. Zn(2+) serves as cofactor. In terms of processing, palmitoylated on Cys-254 by ZDHHC20.

Its subcellular location is the endoplasmic reticulum membrane. The protein localises to the cell membrane. The enzyme catalyses hexadecanoyl-CoA + H2O = hexadecanoate + CoA + H(+). It catalyses the reaction dodecanoyl-CoA + H2O = dodecanoate + CoA + H(+). The catalysed reaction is tetradecanoyl-CoA + H2O = tetradecanoate + CoA + H(+). It carries out the reaction octadecanoyl-CoA + H2O = octadecanoate + CoA + H(+). The enzyme catalyses a beta-lactam + H2O = a substituted beta-amino acid. Its function is as follows. Acyl-CoA thioesterases are a group of enzymes that catalyze the hydrolysis of acyl-CoAs to the free fatty acid and coenzyme A (CoASH), providing the potential to regulate intracellular levels of acyl-CoAs, free fatty acids and CoASH. Has an acyl-CoA thioesterase activity towards the long chain fatty acyl-CoA thioester palmitoyl-CoA (hexadecanoyl-CoA; C16:0-CoA). Displays a substrate preference for fatty acyl-CoAs with chain-lengths C12-C18. In Bos taurus (Bovine), this protein is Acyl-coenzyme A thioesterase MBLAC2 (MBLAC2).